Reading from the N-terminus, the 256-residue chain is Small ribosomal subunit protein uS2 (256 aa).

The segment at proline 229–glutamate 256 is disordered. The span at aspartate 232–glutamate 256 shows a compositional bias: acidic residues.

This sequence belongs to the universal ribosomal protein uS2 family.

The chain is Small ribosomal subunit protein uS2 from Picosynechococcus sp. (strain ATCC 27264 / PCC 7002 / PR-6) (Agmenellum quadruplicatum).